Here is a 253-residue protein sequence, read N- to C-terminus: Uroplakin-3b-like protein 1 (253 aa).

The first 26 residues, 1 to 26, serve as a signal peptide directing secretion; the sequence is MGLGRGQSPLLMALLLLLACLQMGMS. The Extracellular portion of the chain corresponds to 27-194; it reads LERISYVPQL…PGPQTAGTVV (168 aa). 2 N-linked (GlcNAc...) asparagine glycosylation sites follow: asparagine 78 and asparagine 130. Residues 195–215 traverse the membrane as a helical segment; it reads IIAILSVLLAVLLAALLALLI. Topologically, residues 216–253 are cytoplasmic; that stretch reads FTWYDTCGSTPISGPGELVFVRKYDTHHMSRPSTVGGS.

It belongs to the uroplakin-3 family.

The protein resides in the membrane. The sequence is that of Uroplakin-3b-like protein 1 from Bos taurus (Bovine).